We begin with the raw amino-acid sequence, 648 residues long: Probable ATP-dependent RNA helicase DDX43 (648 aa).

The tract at residues 1–60 (MSHHGGAPKASTWVVASRRSSTVSRAPERRPAEELNRTGPEGYSVGRGGRWRGTSRPPEA) is disordered. A compositionally biased stretch (low complexity) spans 10 to 25 (ASTWVVASRRSSTVSR). The span at 26 to 36 (APERRPAEELN) shows a compositional bias: basic and acidic residues. In terms of domain architecture, KH spans 67–128 (ELPLCFALKS…AMQTKAKAVI (62 aa)). A Q motif motif is present at residues 242-270 (TFDDAFQCYPEVMENIKKAGFQKPTPIQS). Residues 273–448 (WPIVLQGIDL…QSYLKEPMIV (176 aa)) enclose the Helicase ATP-binding domain. 286–293 (AQTGTGKT) serves as a coordination point for ATP. The DEAD box signature appears at 396–399 (DEAD). One can recognise a Helicase C-terminal domain in the interval 460-621 (SVKQNIIVTT…SIPEELVSMA (162 aa)). Basic and acidic residues predominate over residues 628-641 (QQKREMERKMERPQ). The disordered stretch occupies residues 628–648 (QQKREMERKMERPQGRPKKFH).

It belongs to the DEAD box helicase family. In terms of tissue distribution, expressed in testis. Expressed in many tumors of various histological types at a level that is 100-fold higher than the level observed in normal tissues except testis.

It catalyses the reaction ATP + H2O = ADP + phosphate + H(+). This chain is Probable ATP-dependent RNA helicase DDX43 (DDX43), found in Homo sapiens (Human).